The chain runs to 376 residues: Chaperone protein DnaJ (376 aa).

One can recognise a J domain in the interval 5–70 (DYYEVLGVAK…QKRAAYDQYG (66 aa)). Residues 136–214 (GYDTQIRVPS…CHGSGKVKET (79 aa)) form a CR-type zinc finger. Zn(2+)-binding residues include Cys-149, Cys-152, Cys-166, Cys-169, Cys-188, Cys-191, Cys-202, and Cys-205. 4 CXXCXGXG motif repeats span residues 149–156 (CEVCHGSG), 166–173 (CPTCHGQG), 188–195 (CPKCHGTG), and 202–209 (CAHCHGSG).

Belongs to the DnaJ family. In terms of assembly, homodimer. It depends on Zn(2+) as a cofactor.

It is found in the cytoplasm. Functionally, participates actively in the response to hyperosmotic and heat shock by preventing the aggregation of stress-denatured proteins and by disaggregating proteins, also in an autonomous, DnaK-independent fashion. Unfolded proteins bind initially to DnaJ; upon interaction with the DnaJ-bound protein, DnaK hydrolyzes its bound ATP, resulting in the formation of a stable complex. GrpE releases ADP from DnaK; ATP binding to DnaK triggers the release of the substrate protein, thus completing the reaction cycle. Several rounds of ATP-dependent interactions between DnaJ, DnaK and GrpE are required for fully efficient folding. Also involved, together with DnaK and GrpE, in the DNA replication of plasmids through activation of initiation proteins. In Burkholderia multivorans (strain ATCC 17616 / 249), this protein is Chaperone protein DnaJ.